Here is a 209-residue protein sequence, read N- to C-terminus: HTLV-1 basic zipper factor (209 aa).

The interval aspartate 48–leucine 162 is disordered. 2 stretches are compositionally biased toward basic and acidic residues: residues alanine 70–lysine 87 and arginine 94–alanine 114. The short motif at lysine 87–lysine 92 is the Nuclear localization signal 1 element. Short sequence motifs (nuclear localization signal) lie at residues arginine 116–alanine 120 and arginine 137–lysine 141. Positions lysine 122 to glutamine 160 are enriched in basic and acidic residues.

It belongs to the HTLV-1 HBZ protein family. In terms of assembly, interacts with host ATF4; this interaction inhibits viral RNA transcriptional activation by preventing ATF4 binding to Tax-responsive elements. Interacts with host CREB1; this interaction inhibits host CREB1 transcriptional activity. Interacts with host JUN, JUNB and JUND. Interacts with host EP300.

The protein localises to the host nucleus. Functionally, contributes to the regulation of viral RNA transcription by interacting with host proteins involved in transcriptional activation such as ATF4, or CREB1, and by inhibiting their activity. Additionally, HBZ suppresses host NF-kappa-B-driven transcription mediated by host RELA as well as transcription of some classical NF-kappa-B target genes, including IL8, IL2RA, IRF4, VCAM1, and VEGFA. This chain is HTLV-1 basic zipper factor (HBZ), found in Homo sapiens (Human).